Here is a 370-residue protein sequence, read N- to C-terminus: Mitochondrial distribution and morphology protein 10 (370 aa).

Belongs to the MDM10 family. In terms of assembly, component of the ER-mitochondria encounter structure (ERMES) or MDM complex, composed of mmm1, mdm10, mdm12 and mdm34. Associates with the mitochondrial outer membrane sorting assembly machinery SAM(core) complex.

Its subcellular location is the mitochondrion outer membrane. Its function is as follows. Component of the ERMES/MDM complex, which serves as a molecular tether to connect the endoplasmic reticulum and mitochondria. Components of this complex are involved in the control of mitochondrial shape and protein biogenesis and may function in phospholipid exchange. mdm10 is involved in the late assembly steps of the general translocase of the mitochondrial outer membrane (TOM complex). Functions in the tom40-specific route of the assembly of outer membrane beta-barrel proteins, including the association of tom40 with the receptor tom22 and small TOM proteins. Can associate with the SAM(core) complex as well as the mdm12-mmm1 complex, both involved in late steps of the major beta-barrel assembly pathway, that is responsible for biogenesis of all outer membrane beta-barrel proteins. May act as a switch that shuttles between both complexes and channels precursor proteins into the tom40-specific pathway. Plays a role in mitochondrial morphology and in the inheritance of mitochondria. The sequence is that of Mitochondrial distribution and morphology protein 10 (mdm10) from Schizosaccharomyces pombe (strain 972 / ATCC 24843) (Fission yeast).